Here is an 83-residue protein sequence, read N- to C-terminus: Cytochrome b559 subunit alpha (83 aa).

A helical membrane pass occupies residues 21–35 (VIHSITIPSLFIAGW). Position 23 (H23) interacts with heme.

This sequence belongs to the PsbE/PsbF family. Heterodimer of an alpha subunit and a beta subunit. PSII is composed of 1 copy each of membrane proteins PsbA, PsbB, PsbC, PsbD, PsbE, PsbF, PsbH, PsbI, PsbJ, PsbK, PsbL, PsbM, PsbT, PsbX, PsbY, PsbZ, Psb30/Ycf12, at least 3 peripheral proteins of the oxygen-evolving complex and a large number of cofactors. It forms dimeric complexes. Heme b is required as a cofactor.

The protein resides in the plastid. The protein localises to the chloroplast thylakoid membrane. In terms of biological role, this b-type cytochrome is tightly associated with the reaction center of photosystem II (PSII). PSII is a light-driven water:plastoquinone oxidoreductase that uses light energy to abstract electrons from H(2)O, generating O(2) and a proton gradient subsequently used for ATP formation. It consists of a core antenna complex that captures photons, and an electron transfer chain that converts photonic excitation into a charge separation. The chain is Cytochrome b559 subunit alpha from Adiantum capillus-veneris (Maidenhair fern).